The primary structure comprises 145 residues: D-aminoacyl-tRNA deacylase (145 aa).

The Gly-cisPro motif, important for rejection of L-amino acids motif lies at 137–138 (GP).

The protein belongs to the DTD family. As to quaternary structure, homodimer.

Its subcellular location is the cytoplasm. It catalyses the reaction glycyl-tRNA(Ala) + H2O = tRNA(Ala) + glycine + H(+). It carries out the reaction a D-aminoacyl-tRNA + H2O = a tRNA + a D-alpha-amino acid + H(+). Its function is as follows. An aminoacyl-tRNA editing enzyme that deacylates mischarged D-aminoacyl-tRNAs. Also deacylates mischarged glycyl-tRNA(Ala), protecting cells against glycine mischarging by AlaRS. Acts via tRNA-based rather than protein-based catalysis; rejects L-amino acids rather than detecting D-amino acids in the active site. By recycling D-aminoacyl-tRNA to D-amino acids and free tRNA molecules, this enzyme counteracts the toxicity associated with the formation of D-aminoacyl-tRNA entities in vivo and helps enforce protein L-homochirality. The sequence is that of D-aminoacyl-tRNA deacylase from Pseudomonas fluorescens (strain Pf0-1).